Here is a 306-residue protein sequence, read N- to C-terminus: MELKDYYAIMGVKPTDDLKTIKTAYRRLARKYHPDVSKEPDAEARFKEVAEAWEVLSDEQRRAEYDQMWQHRNDPQFNRQFHHGDGQSFNAEDFDDIFSSIFGQHARQARQRPATRGHDIEIEVPVFLEETLSEHKRTISYNLPVYNAFGMVEQEIPKTLNVKIPAGVGNGQRIRLKGQGTPGENGGPNGDLWLIIHIAPHPLFDVVGQDLEIVVPVAPWEAALGGKVTVPTLKESILLTIPAGSQAGQRLRVKGKGLVSKKHTGDLYAVLKIVMPPKPDENATALWQQLADAQSSFDPRKDWGKA.

The J domain maps to 5-69 (DYYAIMGVKP…QRRAEYDQMW (65 aa)).

The protein resides in the cytoplasm. It is found in the nucleoid. Functionally, DNA-binding protein that preferentially recognizes a curved DNA sequence. It is probably a functional analog of DnaJ; displays overlapping activities with DnaJ, but functions under different conditions, probably acting as a molecular chaperone in an adaptive response to environmental stresses other than heat shock. Lacks autonomous chaperone activity; binds native substrates and targets them for recognition by DnaK. Its activity is inhibited by the binding of CbpM. In Escherichia fergusonii (strain ATCC 35469 / DSM 13698 / CCUG 18766 / IAM 14443 / JCM 21226 / LMG 7866 / NBRC 102419 / NCTC 12128 / CDC 0568-73), this protein is Curved DNA-binding protein.